We begin with the raw amino-acid sequence, 79 residues long: Small ribosomal subunit protein uS17 (79 aa).

The protein belongs to the universal ribosomal protein uS17 family. Part of the 30S ribosomal subunit.

Its function is as follows. One of the primary rRNA binding proteins, it binds specifically to the 5'-end of 16S ribosomal RNA. This Paramagnetospirillum magneticum (strain ATCC 700264 / AMB-1) (Magnetospirillum magneticum) protein is Small ribosomal subunit protein uS17.